Here is a 520-residue protein sequence, read N- to C-terminus: UDP-N-acetylmuramoyl-L-alanyl-D-glutamate--2,6-diaminopimelate ligase (520 aa).

Residue leucine 48 coordinates UDP-N-acetyl-alpha-D-muramoyl-L-alanyl-D-glutamate. 134-140 (GTSGKTT) contacts ATP. Residues 176–177 (TT), serine 203, and arginine 211 each bind UDP-N-acetyl-alpha-D-muramoyl-L-alanyl-D-glutamate. At lysine 243 the chain carries N6-carboxylysine. Meso-2,6-diaminopimelate-binding positions include arginine 405, 429 to 432 (DNPR), glycine 483, and glutamate 487. The Meso-diaminopimelate recognition motif motif lies at 429 to 432 (DNPR).

The protein belongs to the MurCDEF family. MurE subfamily. It depends on Mg(2+) as a cofactor. Post-translationally, carboxylation is probably crucial for Mg(2+) binding and, consequently, for the gamma-phosphate positioning of ATP.

It is found in the cytoplasm. It catalyses the reaction UDP-N-acetyl-alpha-D-muramoyl-L-alanyl-D-glutamate + meso-2,6-diaminopimelate + ATP = UDP-N-acetyl-alpha-D-muramoyl-L-alanyl-gamma-D-glutamyl-meso-2,6-diaminopimelate + ADP + phosphate + H(+). It participates in cell wall biogenesis; peptidoglycan biosynthesis. Functionally, catalyzes the addition of meso-diaminopimelic acid to the nucleotide precursor UDP-N-acetylmuramoyl-L-alanyl-D-glutamate (UMAG) in the biosynthesis of bacterial cell-wall peptidoglycan. The polypeptide is UDP-N-acetylmuramoyl-L-alanyl-D-glutamate--2,6-diaminopimelate ligase (Mycobacterium avium (strain 104)).